The primary structure comprises 404 residues: Multidrug resistance protein MdtG (404 aa).

Helical transmembrane passes span 19 to 39, 56 to 76, 90 to 110, 113 to 133, 144 to 164, 171 to 191, 222 to 242, 254 to 274, 288 to 308, 317 to 337, and 376 to 396; these read LGCFLTGAAFSLVMPFLPLYV, LVFSITFLFSAIASPFWGGLA, LGMAIVMLLMGMAQNIWQFLI, ALLGLLGGFIPNANALIATQV, TLSTGGVSGALLGPLAGGLLA, PVFFITASVLFICFLLTFFFI, LFVTTLIIQVATGSIAPILTL, IAFISGMIASVPGVAALLSAP, ILIVALIISVLLLIPMSFVQT, FLLGAADGALLPAVQTLLVYN, and AVFCVTAGVVLFNAIYSWNSL.

Belongs to the major facilitator superfamily. DHA1 family. MdtG (TC 2.A.1.2.20) subfamily.

It localises to the cell inner membrane. In Salmonella typhi, this protein is Multidrug resistance protein MdtG.